A 231-amino-acid chain; its full sequence is Ion-translocating oxidoreductase complex subunit E (231 aa).

The next 6 helical transmembrane spans lie at 18–38 (GLVQ…LTNA), 39–59 (LGLG…VSLV), 69–89 (IPVF…FINA), 93–113 (GLYL…VIIG), 127–147 (STFD…VLGA), and 182–202 (TFLL…LIAL).

The protein belongs to the NqrDE/RnfAE family. As to quaternary structure, the complex is composed of six subunits: RnfA, RnfB, RnfC, RnfD, RnfE and RnfG.

It is found in the cell inner membrane. Its function is as follows. Part of a membrane-bound complex that couples electron transfer with translocation of ions across the membrane. This is Ion-translocating oxidoreductase complex subunit E from Shewanella piezotolerans (strain WP3 / JCM 13877).